The primary structure comprises 126 residues: Autophagy-related protein 8-like protein DDB_G0290491 (126 aa).

The Phosphatidylethanolamine amidated glycine moiety is linked to residue G123. A propeptide spans 124–126 (SDI) (removed in mature form).

This sequence belongs to the ATG8 family.

It localises to the membrane. This chain is Autophagy-related protein 8-like protein DDB_G0290491, found in Dictyostelium discoideum (Social amoeba).